Consider the following 138-residue polypeptide: MLQPARTKYRKMQKGRMRGKAYRGSDLAQGEYGLQATECGRLTSRQIEAARVAITRYVKRGGKLWIRVFPDKPITKKPAETRMGTGKGNVEFYVAVIKPGRVLYELAGVDDASAKKAFHLAAHKLPVATKMVKRGETL.

The protein belongs to the universal ribosomal protein uL16 family. As to quaternary structure, part of the 50S ribosomal subunit.

Binds 23S rRNA and is also seen to make contacts with the A and possibly P site tRNAs. This Anaeromyxobacter dehalogenans (strain 2CP-1 / ATCC BAA-258) protein is Large ribosomal subunit protein uL16.